Reading from the N-terminus, the 571-residue chain is Leucine aminopeptidase A1, chloroplastic (571 aa).

A chloroplast-targeting transit peptide spans 1–53; the sequence is MATLRVSSLFASSSSSLHSNPSVFTKYQSSPKWAFSFPVTPLCSKRSKRIVHC. The Mg(2+) site is built by Lys-342 and Asp-347. Lys-354 is an active-site residue. Positions 367, 427, and 429 each coordinate Mg(2+). The active site involves Arg-431.

The protein belongs to the peptidase M17 family. Homohexamer (dimer of homotrimers). Mg(2+) is required as a cofactor. As to expression, observed during floral development. Expressed in healthy and senescent leaves, cotyledons (emergence from seed coats), pistils, sepals, petals, stamens, and floral buds (at protein level). Present at very low levels in healthy leaves.

It is found in the plastid. The protein resides in the chloroplast. It catalyses the reaction Release of an N-terminal amino acid, Xaa-|-Yaa-, in which Xaa is preferably Leu, but may be other amino acids including Pro although not Arg or Lys, and Yaa may be Pro. Amino acid amides and methyl esters are also readily hydrolyzed, but rates on arylamides are exceedingly low.. The catalysed reaction is Release of N-terminal proline from a peptide.. Functionally, catalyzes the removal of unsubstituted N-terminal amino acids from various peptides. When associated as homohexamer, catalyzes the proteolyzes of Xaa-Leu dipeptides. Possesses leucine aminopeptidase activity against the model substrate leucine-amido methyl coumarin. Presumably involved in the processing and regular turnover of intracellular proteins. Regulates wound signaling and has a role in insect defense. Its function is as follows. Functions as a molecular chaperone to protect proteins from heat-induced damage. This chain is Leucine aminopeptidase A1, chloroplastic, found in Solanum lycopersicum (Tomato).